A 329-amino-acid polypeptide reads, in one-letter code: UDP-3-O-acylglucosamine N-acyltransferase (329 aa).

Residue His-224 is the Proton acceptor of the active site.

This sequence belongs to the transferase hexapeptide repeat family. LpxD subfamily. In terms of assembly, homotrimer.

It carries out the reaction a UDP-3-O-[(3R)-3-hydroxyacyl]-alpha-D-glucosamine + a (3R)-hydroxyacyl-[ACP] = a UDP-2-N,3-O-bis[(3R)-3-hydroxyacyl]-alpha-D-glucosamine + holo-[ACP] + H(+). It functions in the pathway bacterial outer membrane biogenesis; LPS lipid A biosynthesis. Functionally, catalyzes the N-acylation of UDP-3-O-acylglucosamine using 3-hydroxyacyl-ACP as the acyl donor. Is involved in the biosynthesis of lipid A, a phosphorylated glycolipid that anchors the lipopolysaccharide to the outer membrane of the cell. The polypeptide is UDP-3-O-acylglucosamine N-acyltransferase (Albidiferax ferrireducens (strain ATCC BAA-621 / DSM 15236 / T118) (Rhodoferax ferrireducens)).